The chain runs to 44 residues: MDSPAFFFTIFLWCLLLSITGYSIYVGFGPPSQQLRDPFEEHED.

Residues 6–26 form a helical membrane-spanning segment; that stretch reads FFFTIFLWCLLLSITGYSIYV.

This sequence belongs to the PsbN family.

Its subcellular location is the plastid. The protein localises to the chloroplast thylakoid membrane. Functionally, may play a role in photosystem I and II biogenesis. The sequence is that of Protein PsbN from Chlorella vulgaris (Green alga).